The sequence spans 432 residues: 3-phosphoshikimate 1-carboxyvinyltransferase (432 aa).

Positions 23, 24, and 28 each coordinate 3-phosphoshikimate. Phosphoenolpyruvate is bound at residue K23. Phosphoenolpyruvate is bound by residues G95 and R123. 4 residues coordinate 3-phosphoshikimate: S166, Q168, D315, and K342. Residue Q168 coordinates phosphoenolpyruvate. The active-site Proton acceptor is the D315. Residues R346 and R390 each coordinate phosphoenolpyruvate.

It belongs to the EPSP synthase family. Monomer.

Its subcellular location is the cytoplasm. The catalysed reaction is 3-phosphoshikimate + phosphoenolpyruvate = 5-O-(1-carboxyvinyl)-3-phosphoshikimate + phosphate. It functions in the pathway metabolic intermediate biosynthesis; chorismate biosynthesis; chorismate from D-erythrose 4-phosphate and phosphoenolpyruvate: step 6/7. Functionally, catalyzes the transfer of the enolpyruvyl moiety of phosphoenolpyruvate (PEP) to the 5-hydroxyl of shikimate-3-phosphate (S3P) to produce enolpyruvyl shikimate-3-phosphate and inorganic phosphate. This Lactiplantibacillus plantarum (strain ATCC BAA-793 / NCIMB 8826 / WCFS1) (Lactobacillus plantarum) protein is 3-phosphoshikimate 1-carboxyvinyltransferase.